The sequence spans 341 residues: Outer membrane protein U (341 aa).

The N-terminal stretch at 1–21 (MNKTLIALAVSAAAVATGAYA) is a signal peptide.

The protein belongs to the Gram-negative porin family. As to quaternary structure, homotrimer.

It localises to the cell outer membrane. In terms of biological role, forms pores that allow passive diffusion of small molecules across the outer membrane. This is Outer membrane protein U (ompU) from Vibrio cholerae serotype O1 (strain ATCC 39315 / El Tor Inaba N16961).